Reading from the N-terminus, the 359-residue chain is Peptide chain release factor 1 (359 aa).

Glutamine 236 carries the N5-methylglutamine modification.

This sequence belongs to the prokaryotic/mitochondrial release factor family. Post-translationally, methylated by PrmC. Methylation increases the termination efficiency of RF1.

The protein localises to the cytoplasm. Functionally, peptide chain release factor 1 directs the termination of translation in response to the peptide chain termination codons UAG and UAA. The protein is Peptide chain release factor 1 of Malacoplasma penetrans (strain HF-2) (Mycoplasma penetrans).